We begin with the raw amino-acid sequence, 434 residues long: Enolase (434 aa).

Gln-163 provides a ligand contact to (2R)-2-phosphoglycerate. Glu-205 acts as the Proton donor in catalysis. Mg(2+) contacts are provided by Asp-242, Glu-291, and Asp-318. Residues Lys-343, Arg-372, Ser-373, and Lys-394 each contribute to the (2R)-2-phosphoglycerate site. The active-site Proton acceptor is Lys-343.

The protein belongs to the enolase family. Requires Mg(2+) as cofactor.

The protein resides in the cytoplasm. Its subcellular location is the secreted. The protein localises to the cell surface. The catalysed reaction is (2R)-2-phosphoglycerate = phosphoenolpyruvate + H2O. It participates in carbohydrate degradation; glycolysis; pyruvate from D-glyceraldehyde 3-phosphate: step 4/5. Functionally, catalyzes the reversible conversion of 2-phosphoglycerate (2-PG) into phosphoenolpyruvate (PEP). It is essential for the degradation of carbohydrates via glycolysis. The protein is Enolase of Streptococcus gordonii (strain Challis / ATCC 35105 / BCRC 15272 / CH1 / DL1 / V288).